Consider the following 85-residue polypeptide: U4-theraphotoxin-Hhn1u (85 aa).

The N-terminal stretch at 1–22 is a signal peptide; sequence MKMTLIAILTCAAVLVLHTTAA. Residues 23-48 constitute a propeptide that is removed on maturation; the sequence is EELEAESQLMEVGMPDTELEAVDEER. 3 disulfides stabilise this stretch: cysteine 52/cysteine 66, cysteine 56/cysteine 77, and cysteine 71/cysteine 82.

This sequence belongs to the neurotoxin 12 (Hwtx-2) family. 02 (Hwtx-2) subfamily. In terms of tissue distribution, expressed by the venom gland.

The protein resides in the secreted. Postsynaptic neurotoxin. The sequence is that of U4-theraphotoxin-Hhn1u from Cyriopagopus hainanus (Chinese bird spider).